The sequence spans 418 residues: Intracellular coagulation inhibitor 1 (418 aa).

The N-terminal stretch at Met1 to Ser24 is a signal peptide. N-linked (GlcNAc...) asparagine glycosylation is found at Asn49 and Asn404.

This sequence belongs to the serpin family. Monomer. Forms a covalent heterodimer with clotting factor C. Interacts with big defensin. Post-translationally, N-glycosylated. In terms of tissue distribution, expressed in hemocytes (at protein level).

The protein resides in the secreted. Serine protease inhibitor that specifically inhibits clotting factor C. Does not inhibit clotting factor B or proclotting enzyme. The chain is Intracellular coagulation inhibitor 1 from Tachypleus tridentatus (Japanese horseshoe crab).